Here is a 284-residue protein sequence, read N- to C-terminus: Phosphonates import ATP-binding protein PhnC 2 (284 aa).

Residues 24-264 enclose the ABC transporter domain; that stretch reads IRIDGISVRR…LEARIFPSLA (241 aa). 56 to 63 is a binding site for ATP; it reads GPSGVGKT.

This sequence belongs to the ABC transporter superfamily. Phosphonates importer (TC 3.A.1.9.1) family. In terms of assembly, the complex is composed of two ATP-binding proteins (PhnC), two transmembrane proteins (PhnE) and a solute-binding protein (PhnD).

The protein localises to the cell inner membrane. It carries out the reaction phosphonate(out) + ATP + H2O = phosphonate(in) + ADP + phosphate + H(+). In terms of biological role, part of the ABC transporter complex PhnCDE involved in phosphonates import. Responsible for energy coupling to the transport system. The protein is Phosphonates import ATP-binding protein PhnC 2 of Rhodopseudomonas palustris (strain ATCC BAA-98 / CGA009).